The primary structure comprises 286 residues: NAD kinase (286 aa).

Residue D74 is the Proton acceptor of the active site. NAD(+) is bound by residues 74-75 (DG), 148-149 (ND), D178, A186, 189-194 (TAYNLS), and Q244.

The protein belongs to the NAD kinase family. A divalent metal cation is required as a cofactor.

It is found in the cytoplasm. The catalysed reaction is NAD(+) + ATP = ADP + NADP(+) + H(+). Involved in the regulation of the intracellular balance of NAD and NADP, and is a key enzyme in the biosynthesis of NADP. Catalyzes specifically the phosphorylation on 2'-hydroxyl of the adenosine moiety of NAD to yield NADP. This chain is NAD kinase, found in Campylobacter jejuni subsp. jejuni serotype O:6 (strain 81116 / NCTC 11828).